The primary structure comprises 277 residues: 14-3-3 protein (277 aa).

The interval 252 to 277 is disordered; the sequence is LQTQEQQQQPVGEGAEAPKVEATEQQ. Residues 267–277 are compositionally biased toward basic and acidic residues; sequence EAPKVEATEQQ.

The protein belongs to the 14-3-3 family.

The polypeptide is 14-3-3 protein (Eimeria tenella (Coccidian parasite)).